We begin with the raw amino-acid sequence, 249 residues long: Coproheme decarboxylase (249 aa).

Residues Arg-131, 145–149 (YPMDK), His-172, and Gln-185 contribute to the Fe-coproporphyrin III site. The active site involves Tyr-145.

This sequence belongs to the ChdC family. Type 1 subfamily. The cofactor is Fe-coproporphyrin III.

The catalysed reaction is Fe-coproporphyrin III + 2 H2O2 + 2 H(+) = heme b + 2 CO2 + 4 H2O. It catalyses the reaction Fe-coproporphyrin III + H2O2 + H(+) = harderoheme III + CO2 + 2 H2O. The enzyme catalyses harderoheme III + H2O2 + H(+) = heme b + CO2 + 2 H2O. It participates in porphyrin-containing compound metabolism; protoheme biosynthesis. Involved in coproporphyrin-dependent heme b biosynthesis. Catalyzes the decarboxylation of Fe-coproporphyrin III (coproheme) to heme b (protoheme IX), the last step of the pathway. The reaction occurs in a stepwise manner with a three-propionate intermediate. This is Coproheme decarboxylase from Staphylococcus epidermidis (strain ATCC 12228 / FDA PCI 1200).